The chain runs to 193 residues: Ion-translocating oxidoreductase complex subunit A (193 aa).

The next 6 membrane-spanning stretches (helical) occupy residues 5–25, 47–67, 72–92, 102–122, 134–154, and 167–187; these read ILFFISNILIENFILVKFLGL, FVILTSSVLLWCVNFFILLPL, LRIIAYMLIVSVSVQFLEIVL, LLGIFLPLITTNCTVLAIPLF, IFYGLSASLGFALVMIIFSCI, and FQGAPIILITVSLISITFMGF.

Belongs to the NqrDE/RnfAE family. As to quaternary structure, the complex is composed of six subunits: RnfA, RnfB, RnfC, RnfD, RnfE and RnfG.

It localises to the cell inner membrane. Part of a membrane-bound complex that couples electron transfer with translocation of ions across the membrane. This is Ion-translocating oxidoreductase complex subunit A from Buchnera aphidicola subsp. Acyrthosiphon pisum (strain APS) (Acyrthosiphon pisum symbiotic bacterium).